The following is a 463-amino-acid chain: L-seryl-tRNA(Sec) selenium transferase (463 aa).

Lysine 295 carries the N6-(pyridoxal phosphate)lysine modification.

This sequence belongs to the SelA family. In terms of assembly, homodecamer; pentamer of dimers. Binds only one seryl-tRNA(Sec) per dimer. Pyridoxal 5'-phosphate serves as cofactor.

The protein resides in the cytoplasm. The catalysed reaction is L-seryl-tRNA(Sec) + selenophosphate + H(+) = L-selenocysteinyl-tRNA(Sec) + phosphate. It participates in aminoacyl-tRNA biosynthesis; selenocysteinyl-tRNA(Sec) biosynthesis; selenocysteinyl-tRNA(Sec) from L-seryl-tRNA(Sec) (bacterial route): step 1/1. In terms of biological role, converts seryl-tRNA(Sec) to selenocysteinyl-tRNA(Sec) required for selenoprotein biosynthesis. In Escherichia coli (strain 55989 / EAEC), this protein is L-seryl-tRNA(Sec) selenium transferase.